The following is a 306-amino-acid chain: ATP phosphoribosyltransferase (306 aa).

The protein belongs to the ATP phosphoribosyltransferase family.

It is found in the cytoplasm. The enzyme catalyses 1-(5-phospho-beta-D-ribosyl)-ATP + diphosphate = 5-phospho-alpha-D-ribose 1-diphosphate + ATP. Its pathway is amino-acid biosynthesis; L-histidine biosynthesis; L-histidine from 5-phospho-alpha-D-ribose 1-diphosphate: step 1/9. Functionally, catalyzes the condensation of ATP and 5-phosphoribose 1-diphosphate to form N'-(5'-phosphoribosyl)-ATP (PR-ATP). Has a crucial role in the pathway because the rate of histidine biosynthesis seems to be controlled primarily by regulation of the enzymatic activity. The polypeptide is ATP phosphoribosyltransferase (HIS1) (Candida glabrata (strain ATCC 2001 / BCRC 20586 / JCM 3761 / NBRC 0622 / NRRL Y-65 / CBS 138) (Yeast)).